The chain runs to 307 residues: MVTTLDNALLEEILQQVRPLIGQGKVADYIPALAEVASDRLAIAVCTVDGEIFQAGNATERFSIQSISKVLSLTLALTRYQEHEIWQRVGKEPSGLPFNSLLQLEMEQGKPRNPFINPGALVVCDMLQTRLSAPKQRMLEVVRQLAGEEDLAYDSRVARSEFEHSDRNAAIAYLMKSFGNFENDVLTVLQTYFHYCALRMSCLELARSFVYLANHGRDLSGREVISPLQARQINALMMTSGMYDGAGEFAYRVGMPGKSGVGGGIVAIVPDELSIAVWSPELDASGNSLAGTAALELLSQRISRSIF.

Positions 66, 117, 161, 168, 192, 243, and 261 each coordinate substrate.

The protein belongs to the glutaminase family. As to quaternary structure, homotetramer.

It catalyses the reaction L-glutamine + H2O = L-glutamate + NH4(+). This chain is Glutaminase, found in Serratia proteamaculans (strain 568).